Reading from the N-terminus, the 208-residue chain is Uridine kinase (208 aa).

ATP is bound at residue 11 to 18; that stretch reads GGTGSGKS.

This sequence belongs to the uridine kinase family.

Its subcellular location is the cytoplasm. The catalysed reaction is uridine + ATP = UMP + ADP + H(+). The enzyme catalyses cytidine + ATP = CMP + ADP + H(+). Its pathway is pyrimidine metabolism; CTP biosynthesis via salvage pathway; CTP from cytidine: step 1/3. It functions in the pathway pyrimidine metabolism; UMP biosynthesis via salvage pathway; UMP from uridine: step 1/1. This chain is Uridine kinase, found in Alkaliphilus metalliredigens (strain QYMF).